Consider the following 173-residue polypeptide: ATP synthase subunit b (173 aa).

A helical membrane pass occupies residues 18 to 38 (IFWSLVILIIVAVFFYKFFLP).

The protein belongs to the ATPase B chain family. As to quaternary structure, F-type ATPases have 2 components, F(1) - the catalytic core - and F(0) - the membrane proton channel. F(1) has five subunits: alpha(3), beta(3), gamma(1), delta(1), epsilon(1). F(0) has three main subunits: a(1), b(2) and c(10-14). The alpha and beta chains form an alternating ring which encloses part of the gamma chain. F(1) is attached to F(0) by a central stalk formed by the gamma and epsilon chains, while a peripheral stalk is formed by the delta and b chains.

The protein localises to the cell membrane. Functionally, f(1)F(0) ATP synthase produces ATP from ADP in the presence of a proton or sodium gradient. F-type ATPases consist of two structural domains, F(1) containing the extramembraneous catalytic core and F(0) containing the membrane proton channel, linked together by a central stalk and a peripheral stalk. During catalysis, ATP synthesis in the catalytic domain of F(1) is coupled via a rotary mechanism of the central stalk subunits to proton translocation. In terms of biological role, component of the F(0) channel, it forms part of the peripheral stalk, linking F(1) to F(0). In Bifidobacterium adolescentis (strain ATCC 15703 / DSM 20083 / NCTC 11814 / E194a), this protein is ATP synthase subunit b.